Consider the following 467-residue polypeptide: Cruzipain (467 aa).

A signal peptide spans 1–18 (MSGWARALLLAAVLVVMA). A propeptide spans 19–122 (CLVPAATASL…RVPVKVEVVG (104 aa)) (activation peptide). 3 disulfide bridges follow: cysteine 144–cysteine 185, cysteine 178–cysteine 223, and cysteine 277–cysteine 325. Cysteine 147 is a catalytic residue. An N-linked (GlcNAc...) asparagine glycan is attached at asparagine 169. Histidine 284 is an active-site residue. The N-linked (GlcNAc...) asparagine glycan is linked to asparagine 292. The active site involves asparagine 304. The disordered stretch occupies residues 333-355 (SAVVGGPGPTPEPTTTTTTSAPG). Residues 345 to 354 (PTTTTTTSAP) show a composition bias toward low complexity. The N-linked (GlcNAc...) asparagine glycan is linked to asparagine 377.

It belongs to the peptidase C1 family.

The enzyme catalyses Broad endopeptidase specificity similar to that of cathepsin L.. Its activity is regulated as follows. Strongly inhibited by E-64 (L-trans-epoxysuccinylleucylamido(4-guanidino)butane), Leupeptin, and N-alpha-p-tosyl-L-lysine chloromethyl ketone. In terms of biological role, hydrolyzes chromogenic peptides at the carboxyl Arg or Lys; requires at least one more amino acid, preferably Arg, Phe, Val or Leu, between the terminal Arg or Lys and the amino-blocking group. Its function is as follows. The cysteine protease may play an important role in the development and differentiation of the parasites at several stages of their life cycle. The polypeptide is Cruzipain (Trypanosoma cruzi).